Consider the following 292-residue polypeptide: Ribosomal protein L11 methyltransferase (292 aa).

The S-adenosyl-L-methionine site is built by T144, G165, D187, and N229.

It belongs to the methyltransferase superfamily. PrmA family.

The protein localises to the cytoplasm. The enzyme catalyses L-lysyl-[protein] + 3 S-adenosyl-L-methionine = N(6),N(6),N(6)-trimethyl-L-lysyl-[protein] + 3 S-adenosyl-L-homocysteine + 3 H(+). Functionally, methylates ribosomal protein L11. In Ectopseudomonas mendocina (strain ymp) (Pseudomonas mendocina), this protein is Ribosomal protein L11 methyltransferase.